The sequence spans 495 residues: Glucose-6-phosphate 1-dehydrogenase (495 aa).

Residue K51 forms an Isoglutamyl lysine isopeptide (Lys-Gln) (interchain with Q-Cter in protein Pup) linkage. Residues 94 to 95 (DL) and K154 contribute to the NADP(+) site. 4 residues coordinate substrate: H184, K188, E222, and D241. The active-site Proton acceptor is the H246. Residue K345 participates in substrate binding.

Belongs to the glucose-6-phosphate dehydrogenase family.

The enzyme catalyses D-glucose 6-phosphate + NADP(+) = 6-phospho-D-glucono-1,5-lactone + NADPH + H(+). It functions in the pathway carbohydrate degradation; pentose phosphate pathway; D-ribulose 5-phosphate from D-glucose 6-phosphate (oxidative stage): step 1/3. Catalyzes the oxidation of glucose 6-phosphate to 6-phosphogluconolactone. The sequence is that of Glucose-6-phosphate 1-dehydrogenase from Mycolicibacterium smegmatis (strain ATCC 700084 / mc(2)155) (Mycobacterium smegmatis).